A 1196-amino-acid polypeptide reads, in one-letter code: Ice nucleation protein (1196 aa).

Residues 172 to 1147 (ATYGSTLSGD…LSAGEDSTLI (976 aa)) form an octapeptide periodicity region. Disordered stretches follow at residues 269–304 (GYGS…GYGS), 319–352 (GSTQ…GYGS), and 415–442 (GSTQ…GSNL). Polar residues-rich tracts occupy residues 271–298 (GSTQ…GSNL) and 319–346 (GSTQ…GSNL).

Belongs to the bacterial ice nucleation protein family. As to quaternary structure, membrane environment or aggregation seems to be required for ice nucleation activity.

Its subcellular location is the cell outer membrane. Ice nucleation proteins enable bacteria to nucleate crystallization in supercooled water. This chain is Ice nucleation protein (inaV), found in Pseudomonas syringae.